Reading from the N-terminus, the 509-residue chain is Tyrosine-protein kinase Lck (509 aa).

Gly-2 carries N-myristoyl glycine lipidation. Residues 2–72 (GCGCSSHPED…DNLVIALHSY (71 aa)) form an interactions with CD4 and CD8 region. Residues Cys-3 and Cys-5 are each lipidated (S-palmitoyl cysteine). The 61-residue stretch at 61 to 121 (LQDNLVIALH…PFNFVAKANS (61 aa)) folds into the SH3 domain. Lys-99 participates in a covalent cross-link: Glycyl lysine isopeptide (Lys-Gly) (interchain with G-Cter in ubiquitin). Position 102 is a phosphoserine (Ser-102). Positions 127–224 (WFFKNLSRKD…GLCTRLSRPC (98 aa)) constitute an SH2 domain. Residues 154–242 (RESESTAGSF…WWEDEWEVPR (89 aa)) are interaction with PTPRH. Thr-159 carries the post-translational modification Phosphothreonine. A Phosphoserine modification is found at Ser-162. Tyr-192 is subject to Phosphotyrosine. Ser-194 is subject to Phosphoserine. Residues 245 to 498 (LKLVERLGAG…YLRSVLEDFF (254 aa)) form the Protein kinase domain. Residues 251–259 (LGAGQFGEV) and Lys-273 each bind ATP. Lys-276 participates in a covalent cross-link: Glycyl lysine isopeptide (Lys-Gly) (interchain with G-Cter in ubiquitin). Asp-364 functions as the Proton acceptor in the catalytic mechanism. The residue at position 394 (Tyr-394) is a Phosphotyrosine; by autocatalysis. Phosphotyrosine; by CSK is present on Tyr-505.

This sequence belongs to the protein kinase superfamily. Tyr protein kinase family. SRC subfamily. As to quaternary structure, binds to the cytoplasmic domain of cell surface receptors, such as AXL, CD2, CD4, CD5, CD8, CD44, CD45 and CD122. Also binds to effector molecules, such as PI4K, VAV1, RASA1, FYB1 and to other protein kinases including CDK1, RAF1, ZAP70 and SYK. Binds to phosphatidylinositol 3'-kinase (PI3K) from T-lymphocytes through its SH3 domain and to the tyrosine phosphorylated form of KHDRBS1/p70 through its SH2 domain. This interaction inhibits its tyrosine-kinase activity. Interacts with SQSTM1. Interacts with phosphorylated LIME1. Interacts with CBLB and PTPRH. Interacts with RUNX3. Forms a signaling complex with EPHA1, PTK2B and PI3-KINASE; upon activation by EFNA1 which may regulate T-lymphocyte migration. Associates with ZAP70 and RHOH; these interactions allow LCK-mediated RHOH and CD3 subunit phosphorylation in the presence of functional ZAP70. Interacts with UNC119; this interaction plays a crucial role in activation of LCK. Interacts with CEACAM1 (via cytoplasmic domain); mediates CEACAM1 phosphorylation resulting in PTPN6 recruitment that dephosphorylates TCR stimulation-induced CD247 and ZAP70. Interacts with CD160. Interacts with CD48. (Microbial infection) Interacts with herpes simplex virus 1 UL46; this interaction activates LCK. In terms of assembly, (Microbial infection) Interacts with HIV-1 Nef through its SH3 domain. In terms of processing, autophosphorylated on Tyr-394, increasing enzymatic activity, this site is dephosphorylated by PTN22. Phosphorylated on Tyr-505 by CSK, decreasing activity. Dephosphorylated by PTPRC/CD45. Dephosphorylation at Tyr-394 by PTPN2 negatively regulates T-cell receptor signaling. Dephosphorylation at Tyr-394 by DUSP22 negatively regulates T-cell receptor signaling. Myristoylation is required prior to palmitoylation. Post-translationally, palmitoylation regulates association with the plasma membrane and could be mediated by ZDHHC2. In terms of processing, 'Lys-63'-linked ubiquitinated at Lys-99 and Lys-276 by UBR2; this modification is required for autophosphorylation at Tyr-394. As to expression, expressed specifically in lymphoid cells.

It localises to the cell membrane. The protein resides in the cytoplasm. The protein localises to the cytosol. The enzyme catalyses L-tyrosyl-[protein] + ATP = O-phospho-L-tyrosyl-[protein] + ADP + H(+). Its activity is regulated as follows. The relative activities of the inhibitory tyrosine-protein kinase CSK and the activating tyrosine-protein phosphatase PTPRC/CD45 determine the level of LCK activity. These interactions allow rapid and efficient activation of LCK in response to TCR stimulation. Its function is as follows. Non-receptor tyrosine-protein kinase that plays an essential role in the selection and maturation of developing T-cells in the thymus and in the function of mature T-cells. Plays a key role in T-cell antigen receptor (TCR)-linked signal transduction pathways. Constitutively associated with the cytoplasmic portions of the CD4 and CD8 surface receptors. Association of the TCR with a peptide antigen-bound MHC complex facilitates the interaction of CD4 and CD8 with MHC class II and class I molecules, respectively, thereby recruiting the associated LCK protein to the vicinity of the TCR/CD3 complex. LCK then phosphorylates tyrosine residues within the immunoreceptor tyrosine-based activation motifs (ITAM) of the cytoplasmic tails of the TCR-gamma chains and CD3 subunits, initiating the TCR/CD3 signaling pathway. Once stimulated, the TCR recruits the tyrosine kinase ZAP70, that becomes phosphorylated and activated by LCK. Following this, a large number of signaling molecules are recruited, ultimately leading to lymphokine production. LCK also contributes to signaling by other receptor molecules. Associates directly with the cytoplasmic tail of CD2, which leads to hyperphosphorylation and activation of LCK. Also plays a role in the IL2 receptor-linked signaling pathway that controls the T-cell proliferative response. Binding of IL2 to its receptor results in increased activity of LCK. Is expressed at all stages of thymocyte development and is required for the regulation of maturation events that are governed by both pre-TCR and mature alpha beta TCR. Phosphorylates other substrates including RUNX3, PTK2B/PYK2, the microtubule-associated protein MAPT, RHOH or TYROBP. Interacts with FYB2. The chain is Tyrosine-protein kinase Lck (LCK) from Homo sapiens (Human).